Consider the following 1108-residue polypeptide: AP-3 complex subunit beta (1108 aa).

4 HEAT repeats span residues 90–127 (DSAL…IDII), 327–363 (IEAQ…LRPS), 397–433 (ENIG…STVP), and 434–471 (DVTE…LNAT). A compositionally biased stretch (basic and acidic residues) spans 480 to 490 (KEKEKEKDVKE). 3 disordered regions span residues 480 to 501 (KEKE…HSSS), 736 to 797 (DEEE…YDGE), and 811 to 835 (LFGI…GEEE). Acidic residues-rich tracts occupy residues 736-764 (DEEE…EDFF) and 780-797 (YDED…YDGE).

It belongs to the adaptor complexes large subunit family. Adaptor protein complex 3 (AP-3) is a heterotetramer composed of two large adaptins (delta-type subunit and beta-type subunit), a medium adaptin (mu-type subunit) and a small adaptin (sigma-type subunit).

It localises to the endosome membrane. In terms of biological role, part of the AP-3 complex, an adaptor-related complex which is essential for the compartmentalization of the endocytic pathway. The chain is AP-3 complex subunit beta (ap3b-1) from Dictyostelium discoideum (Social amoeba).